Here is a 132-residue protein sequence, read N- to C-terminus: Glycerol-3-phosphate cytidylyltransferase (132 aa).

CTP-binding positions include 9–10 (TY) and 14–17 (HYGH). Substrate is bound at residue Lys-44. Residue Lys-46 participates in CTP binding. Residue Lys-77 coordinates substrate. 113–120 (RTEGISTT) serves as a coordination point for CTP.

This sequence belongs to the cytidylyltransferase family. In terms of assembly, homotetramer or homodimer.

It is found in the cytoplasm. The enzyme catalyses sn-glycerol 3-phosphate + CTP + H(+) = CDP-glycerol + diphosphate. Its pathway is cell wall biogenesis; poly(ribitol phosphate) teichoic acid biosynthesis. Its function is as follows. Catalyzes the transfer of the cytidylyl group of CTP to sn-glycerol 3-phosphate so the activated glycerol 3-phosphate can be used for teichoic acid synthesis, via incorporation into both the linkage unit by TarB and TarF. The polypeptide is Glycerol-3-phosphate cytidylyltransferase (Staphylococcus aureus (strain NCTC 8325 / PS 47)).